Consider the following 250-residue polypeptide: N-acyl homoserine lactonase (250 aa).

Positions 104, 106, 108, 109, 169, 191, and 235 each coordinate Zn(2+).

Belongs to the metallo-beta-lactamase superfamily. Monomer. The cofactor is Zn(2+).

The enzyme catalyses an N-acyl-L-homoserine lactone + H2O = an N-acyl-L-homoserine + H(+). This is N-acyl homoserine lactonase from Bacillus cereus.